The sequence spans 382 residues: Serine/threonine-protein kinase (382 aa).

A compositionally biased stretch (basic and acidic residues) spans 1 to 10 (MENKQCDHLT). The disordered stretch occupies residues 1 to 75 (MENKQCDHLT…ASESDEDDDD (75 aa)). Residues 12–24 (WFSTTSDASESMD) show a composition bias toward polar residues. Over residues 45 to 75 (ADEDLYSDISEGDLEYSDCDSASESDEDDDD) the composition is skewed to acidic residues. The 287-residue stretch at 93 to 379 (YTVIKTLTPG…AEELLSYPMF (287 aa)) folds into the Protein kinase domain. Residues 99–107 (LTPGSEGRV) and K122 each bind ATP. Catalysis depends on D207, which acts as the Proton acceptor.

This sequence belongs to the protein kinase superfamily. Ser/Thr protein kinase family.

The catalysed reaction is L-seryl-[protein] + ATP = O-phospho-L-seryl-[protein] + ADP + H(+). It carries out the reaction L-threonyl-[protein] + ATP = O-phospho-L-threonyl-[protein] + ADP + H(+). The chain is Serine/threonine-protein kinase (US2) from Equus caballus (Horse).